The chain runs to 373 residues: MNTFGDNFRVTTWGESHGKALGAVIDGCPANLPISEQDIQNELNRRRPGYSIFSTPRKEEDKVEILSGIFEGKTTGTPISGLVFNKGQKSKDYSKIKDTPRPGHADLNYFLKYGNYDYRGGGRSSGRTTIGNVIGGAVAKKLIEFTHNIKIIGYSTKIGKIKGDFDYYKNPKFFESDSNIEKLLKKIENNPLRCPSKNSDEMKDYVIDAMDKKDSVGGIIEIIIKGIPQGVGNPVFNKLEGKLGSAFIGINAVKGFEIGRGFEASELYGSEMNDAYHIYENSIKEMTNNAGGIIGGISTGSPVVLRVSIKPTPSISKIQDSMNLISNKDEKIEIGGRHDPIIVPRVIPVLESMAAITVADLMISSGYINPCRI.

NADP(+) is bound at residue Arg46. Residues 123–125 (RSS), 251–252 (NA), Gly295, 310–314 (KPTPS), and Arg337 contribute to the FMN site.

Belongs to the chorismate synthase family. It depends on FMNH2 as a cofactor.

The enzyme catalyses 5-O-(1-carboxyvinyl)-3-phosphoshikimate = chorismate + phosphate. Its pathway is metabolic intermediate biosynthesis; chorismate biosynthesis; chorismate from D-erythrose 4-phosphate and phosphoenolpyruvate: step 7/7. Its function is as follows. Catalyzes the anti-1,4-elimination of the C-3 phosphate and the C-6 proR hydrogen from 5-enolpyruvylshikimate-3-phosphate (EPSP) to yield chorismate, which is the branch point compound that serves as the starting substrate for the three terminal pathways of aromatic amino acid biosynthesis. This reaction introduces a second double bond into the aromatic ring system. The polypeptide is Chorismate synthase (Methanococcus maripaludis (strain C7 / ATCC BAA-1331)).